A 179-amino-acid chain; its full sequence is Large ribosomal subunit protein uL5 (179 aa).

Belongs to the universal ribosomal protein uL5 family. Part of the 50S ribosomal subunit; part of the 5S rRNA/L5/L18/L25 subcomplex. Contacts the 5S rRNA and the P site tRNA. Forms a bridge to the 30S subunit in the 70S ribosome.

Functionally, this is one of the proteins that bind and probably mediate the attachment of the 5S RNA into the large ribosomal subunit, where it forms part of the central protuberance. In the 70S ribosome it contacts protein S13 of the 30S subunit (bridge B1b), connecting the 2 subunits; this bridge is implicated in subunit movement. Contacts the P site tRNA; the 5S rRNA and some of its associated proteins might help stabilize positioning of ribosome-bound tRNAs. This chain is Large ribosomal subunit protein uL5, found in Polaromonas naphthalenivorans (strain CJ2).